Here is a 316-residue protein sequence, read N- to C-terminus: Pantothenate kinase (316 aa).

95–102 (GSVAVGKS) contacts ATP.

Belongs to the prokaryotic pantothenate kinase family.

Its subcellular location is the cytoplasm. It carries out the reaction (R)-pantothenate + ATP = (R)-4'-phosphopantothenate + ADP + H(+). The protein operates within cofactor biosynthesis; coenzyme A biosynthesis; CoA from (R)-pantothenate: step 1/5. The sequence is that of Pantothenate kinase from Escherichia coli O17:K52:H18 (strain UMN026 / ExPEC).